A 420-amino-acid polypeptide reads, in one-letter code: Chaperone protein dnaJ 3 (420 aa).

In terms of domain architecture, J spans 14 to 75 (KFYEILGVPK…EKREIYDQYG (62 aa)). The CR-type zinc finger occupies 135–219 (GTMKKLSLSR…CKGDKVIPEK (85 aa)). Positions 148, 151, 164, 167, 191, 194, 207, and 210 each coordinate Zn(2+). CXXCXGXG motif repeat units lie at residues 148-155 (CSKCNGKG), 164-171 (CGGCQGSG), 191-198 (CNECKGTG), and 207-214 (CPQCKGDK). The disordered stretch occupies residues 376-420 (ETTLHDVNIEDEMRRKAQAQREAYDDDDEDDDHPGGAQRVQCAQQ). Positions 377–390 (TTLHDVNIEDEMRR) are enriched in basic and acidic residues. The residue at position 417 (C417) is a Cysteine methyl ester. C417 carries S-farnesyl cysteine lipidation. A propeptide spans 418–420 (AQQ) (removed in mature form).

This sequence belongs to the DnaJ family. A/I subfamily. Homodimer. Requires Zn(2+) as cofactor. Farnesylated. As to expression, roots, shoots, flowers, siliques and cotyledons.

It localises to the membrane. Its function is as follows. Plays a continuous role in plant development probably in the structural organization of compartments. This Arabidopsis thaliana (Mouse-ear cress) protein is Chaperone protein dnaJ 3 (ATJ3).